The chain runs to 731 residues: Inclusion body clearance protein IML2 (731 aa).

Positions 1–26 (MFRVFGSFGSKGNQSSGEEQSTKTKQ) are disordered. Residues 10 to 26 (SKGNQSSGEEQSTKTKQ) show a composition bias toward polar residues. 3 positions are modified to phosphoserine: S265, S268, and S378. T380 is subject to Phosphothreonine. Phosphoserine occurs at positions 383 and 392.

It belongs to the IML2 family. In terms of assembly, interacts with lipid droplet proteins PET10 and PDR16.

The protein resides in the cytoplasm. The protein localises to the nucleus. Inclusion body (IB) resident protein that interacts strongly with lipid droplet (LD) proteins. Involved in LD-mediated IB clearing after protein folding stress, probably by enabling access to the IBs of an LD-stored soluble sterol derivative that acts as a chaperone in inclusion clearing. The polypeptide is Inclusion body clearance protein IML2 (Saccharomyces cerevisiae (strain ATCC 204508 / S288c) (Baker's yeast)).